We begin with the raw amino-acid sequence, 258 residues long: MSGLRLEGKIVIITGGASGIGADAARLFTDHGAKVVIVDVQEELGQNVAVLIGKDKASFYRCDVTNETEVEDAVKFTVEKHGKLDVLFSNAGVLEPLESFLDFDLERFDRIMAVNVRGAAAFIKHAARAMVEKGTRGSIVCTTSVSAEIGGGHHGYTASKHGLVGLIRSACGDLGKYGIRVNGVAPYAVATPMTSHDEVTGKQLEDYFDAKGILKGMVLKASHVAQVALFLASDDSAYISGQNLAVDGGYTVVKPSRD.

12-36 (IITGGASGIGADAARLFTDHGAKVV) contacts NAD(+). Residue S144 coordinates substrate. Y156 serves as the catalytic Proton acceptor.

The protein belongs to the short-chain dehydrogenases/reductases (SDR) family.

This chain is Short-chain dehydrogenase reductase 3c (SDR3c), found in Arabidopsis thaliana (Mouse-ear cress).